The chain runs to 508 residues: MQRLLAPARRVLQVKRAMQETSLTPAHLLSAAQQRFSTIPPAPLAKTDTWPKDVGILALEVYFPAQYVDQTDLEKFNNVEAGKYTVGLGQTRMGFCSVQEDINSLCLTVVQRLMERTKLPWDAVGRLEVGTETIIDKSKAVKTVLMELFQDSGNTDIEGIDTTNACYGGTASLFNAANWMESSYWDGRYALVVCGDIAVYPSGNARPTGGAGAVAMLIGPKAPLVLEQGLRGTHMENAYDFYKPNLASEYPLVDGKLSIQCYLRALDRCYAAYRKKIQNQWKQAGNNQPFTLDDVQYMIFHTPFCKMVQKSLARLMFNDFLSSSSDKQNNLYKGLEAFRGLKLEETYTNKDVDKALLKASLDMFNQKTKASLYLSTNNGNMYTSSLYGCLASLLSHHSAQELAGSRIGAFSYGSGLAASFFSFRVSKDASPGSPLEKLVSSVSDLPKRLDSRRRMSPEEFTEIMNQREQFYHKVNFSPPGDTSNLFPGTWYLERVDEMHRRKYARCPV.

The N-terminal 37 residues, 1 to 37 (MQRLLAPARRVLQVKRAMQETSLTPAHLLSAAQQRFS), are a transit peptide targeting the mitochondrion. The residue at position 52 (K52) is an N6-succinyllysine. Residues E80 and A81 each contribute to the (3S)-3-hydroxy-3-methylglutaryl-CoA site. An N6-acetyllysine; alternate mark is found at K83 and K118. 2 positions are modified to N6-succinyllysine; alternate: K83 and K118. The active-site Proton donor/acceptor is E132. 3 residues coordinate (3S)-3-hydroxy-3-methylglutaryl-CoA: C166, N204, and T208. The Acyl-thioester intermediate role is filled by C166. K221 is modified (N6-succinyllysine). K243 is subject to N6-acetyllysine. An N6-acetyllysine; alternate modification is found at K256. K256 is modified (N6-succinyllysine; alternate). (3S)-3-hydroxy-3-methylglutaryl-CoA-binding residues include S258 and H301. H301 functions as the Proton donor/acceptor in the catalytic mechanism. K306 carries the post-translational modification N6-acetyllysine. K310 serves as a coordination point for (3S)-3-hydroxy-3-methylglutaryl-CoA. N6-acetyllysine; alternate occurs at positions 310 and 327. K310 and K327 each carry N6-succinyllysine; alternate. N6-succinyllysine is present on K333. N6-acetyllysine; alternate is present on residues K342, K350, K354, and K358. Residues K342, K350, K354, and K358 each carry the N6-succinyllysine; alternate modification. (3S)-3-hydroxy-3-methylglutaryl-CoA is bound by residues N380 and S414. N6-acetyllysine is present on K427. S433 carries the post-translational modification Phosphoserine. N6-acetyllysine is present on K437. S440 is modified (phosphoserine). N6-acetyllysine; alternate is present on K447. At K447 the chain carries N6-succinyllysine; alternate. A Phosphoserine modification is found at S456. The residue at position 473 (K473) is an N6-acetyllysine; alternate. K473 carries the N6-succinyllysine; alternate modification. Position 477 is a phosphoserine (S477).

Belongs to the thiolase-like superfamily. HMG-CoA synthase family. As to quaternary structure, homodimer. Acetylation of Lys-427 is observed in liver mitochondria from fasted mice but not from fed mice. Post-translationally, succinylated. Desuccinylated by SIRT5. Succinylation, at least at Lys-83 and Lys-310, inhibits the enzymatic activity. Liver and kidney.

The protein resides in the mitochondrion. The catalysed reaction is acetoacetyl-CoA + acetyl-CoA + H2O = (3S)-3-hydroxy-3-methylglutaryl-CoA + CoA + H(+). It functions in the pathway metabolic intermediate biosynthesis; (R)-mevalonate biosynthesis; (R)-mevalonate from acetyl-CoA: step 2/3. Functionally, catalyzes the first irreversible step in ketogenesis, condensing acetyl-CoA to acetoacetyl-CoA to form HMG-CoA, which is converted by HMG-CoA reductase (HMGCR) into mevalonate. The protein is Hydroxymethylglutaryl-CoA synthase, mitochondrial (Hmgcs2) of Mus musculus (Mouse).